Here is a 210-residue protein sequence, read N- to C-terminus: ESCRT-III complex subunit did4 (210 aa).

The segment at Met1–Lys38 is disordered. A coiled-coil region spans residues Gln15 to Arg97. The segment covering Gly26 to Lys38 has biased composition (basic and acidic residues).

Belongs to the SNF7 family. As to quaternary structure, core component of the ESCRT-III complex (endosomal sorting required for transport complex III). ESCRT-III appears to be sequentially assembled as a flat lattice on the endosome membrane.

Its subcellular location is the cytoplasm. It localises to the endosome membrane. Its function is as follows. Required for the sorting and concentration of proteins resulting in the entry of these proteins into the invaginating vesicles of the multivesicular body (MVB). Acts a component of the ESCRT-III complex, which appears to be critical for late steps in MVB sorting, such as membrane invagination and final cargo sorting and recruitment of late-acting components of the sorting machinery. The MVB pathway requires the sequential function of ESCRT-O, -I,-II and -III complex assemblies. This is ESCRT-III complex subunit did4 (did4) from Schizosaccharomyces pombe (strain 972 / ATCC 24843) (Fission yeast).